The sequence spans 32 residues: Photosystem II reaction center protein T (32 aa).

The chain crosses the membrane as a helical span at residues 3–23 (ALVYTFLLIGTLMVIFFAVFF).

Belongs to the PsbT family. As to quaternary structure, PSII is composed of 1 copy each of membrane proteins PsbA, PsbB, PsbC, PsbD, PsbE, PsbF, PsbH, PsbI, PsbJ, PsbK, PsbL, PsbM, PsbT, PsbX, PsbY, PsbZ, Psb30/Ycf12, at least 3 peripheral proteins of the oxygen-evolving complex and a large number of cofactors. It forms dimeric complexes.

The protein localises to the plastid. The protein resides in the chloroplast thylakoid membrane. Its function is as follows. Found at the monomer-monomer interface of the photosystem II (PS II) dimer, plays a role in assembly and dimerization of PSII. PSII is a light-driven water plastoquinone oxidoreductase, using light energy to abstract electrons from H(2)O, generating a proton gradient subsequently used for ATP formation. This Trieres chinensis (Marine centric diatom) protein is Photosystem II reaction center protein T.